A 302-amino-acid polypeptide reads, in one-letter code: Phosphatidylglycerol--prolipoprotein diacylglyceryl transferase (302 aa).

The next 3 helical transmembrane spans lie at 26–46, 67–87, and 108–128; these read WYAL…VMLV, LVLW…VLFY, and IWEG…AIVL. R156 contributes to the a 1,2-diacyl-sn-glycero-3-phospho-(1'-sn-glycerol) binding site. 2 helical membrane-spanning segments follow: residues 231–251 and 263–283; these read GALV…LEGV and LGLT…VWLL.

The protein belongs to the Lgt family.

It localises to the cell inner membrane. The catalysed reaction is L-cysteinyl-[prolipoprotein] + a 1,2-diacyl-sn-glycero-3-phospho-(1'-sn-glycerol) = an S-1,2-diacyl-sn-glyceryl-L-cysteinyl-[prolipoprotein] + sn-glycerol 1-phosphate + H(+). It participates in protein modification; lipoprotein biosynthesis (diacylglyceryl transfer). Catalyzes the transfer of the diacylglyceryl group from phosphatidylglycerol to the sulfhydryl group of the N-terminal cysteine of a prolipoprotein, the first step in the formation of mature lipoproteins. The polypeptide is Phosphatidylglycerol--prolipoprotein diacylglyceryl transferase (Caulobacter sp. (strain K31)).